Here is a 308-residue protein sequence, read N- to C-terminus: Porphobilinogen deaminase (308 aa).

Cysteine 240 is subject to S-(dipyrrolylmethanemethyl)cysteine.

The protein belongs to the HMBS family. As to quaternary structure, monomer. Dipyrromethane serves as cofactor.

The catalysed reaction is 4 porphobilinogen + H2O = hydroxymethylbilane + 4 NH4(+). It participates in porphyrin-containing compound metabolism; protoporphyrin-IX biosynthesis; coproporphyrinogen-III from 5-aminolevulinate: step 2/4. Functionally, tetrapolymerization of the monopyrrole PBG into the hydroxymethylbilane pre-uroporphyrinogen in several discrete steps. The chain is Porphobilinogen deaminase from Desulfitobacterium hafniense (strain DSM 10664 / DCB-2).